The primary structure comprises 203 residues: A-type ATP synthase subunit E (203 aa).

Belongs to the V-ATPase E subunit family. Has multiple subunits with at least A(3), B(3), C, D, E, F, H, I and proteolipid K(x).

The protein resides in the cell membrane. Functionally, component of the A-type ATP synthase that produces ATP from ADP in the presence of a proton gradient across the membrane. The polypeptide is A-type ATP synthase subunit E (Thermococcus kodakarensis (strain ATCC BAA-918 / JCM 12380 / KOD1) (Pyrococcus kodakaraensis (strain KOD1))).